A 513-amino-acid polypeptide reads, in one-letter code: Ankyrin repeat-containing protein YIL001W (513 aa).

2 ANK repeats span residues 8 to 37 and 41 to 70; these read KNFEELCYSCRTGDMDNVDRLISTGVNVNS and FDNSPLFLASLCGHEAVVKLLLQRGAVCDR. BTB domains lie at 122–179 and 274–360; these read RDIT…KFLY and PDVQ…DIPW.

The polypeptide is Ankyrin repeat-containing protein YIL001W (Saccharomyces cerevisiae (strain ATCC 204508 / S288c) (Baker's yeast)).